The sequence spans 157 residues: Transcription elongation factor GreA (157 aa).

The tract at residues 1 to 24 is disordered; that stretch reads MDKFPMTPEGYHALDEELKRRQQE. The span at 12–24 shows a compositional bias: basic and acidic residues; that stretch reads HALDEELKRRQQE. Residues 53–73 are a coiled coil; it reads EAQSLNEGRIAELEDKLSRAE.

The protein belongs to the GreA/GreB family.

Its function is as follows. Necessary for efficient RNA polymerase transcription elongation past template-encoded arresting sites. The arresting sites in DNA have the property of trapping a certain fraction of elongating RNA polymerases that pass through, resulting in locked ternary complexes. Cleavage of the nascent transcript by cleavage factors such as GreA or GreB allows the resumption of elongation from the new 3'terminus. GreA releases sequences of 2 to 3 nucleotides. The protein is Transcription elongation factor GreA of Beijerinckia indica subsp. indica (strain ATCC 9039 / DSM 1715 / NCIMB 8712).